The chain runs to 437 residues: (S)-6-hydroxynicotine oxidase (437 aa).

Residues serine 16, 35-37, arginine 43, 57-60, valine 231, serine 405, and 413-415 each bind FAD; these read EAR, GGAG, and EYI.

Belongs to the flavin monoamine oxidase family. As to quaternary structure, homodimer. FAD serves as cofactor.

The enzyme catalyses (S)-6-hydroxynicotine + O2 + H2O = 6-hydroxypseudooxynicotine + H2O2. The catalysed reaction is (S)-6-hydroxynicotine + O2 = 6-hydroxy-N-methylmyosmine + H2O2. The protein operates within alkaloid degradation; nicotine degradation; 6-hydroxypseudooxynicotine from nicotine (S-isomer route): step 2/2. Partially inhibited by Co(2+) or Zn(2+) and significantly inhibited by Ag(+), Cu(2+) and Hg(2+). Functionally, involved in the degradation of L-nicotine. Catalyzes the oxidation of (S)-6-hydroxynicotine (6-hydroxy-L-nicotine) to 6-hydroxypseudooxynicotine. Oxidation of the pyrrolidine ring of (S)-6-hydroxynicotine leads to the formation of the optically inactive 6-hydroxy-N-methylmyosmine, which hydrolyzes spontaneously to 6-hydroxypseudooxynicotine. Acts with absolute stereospecificity on the L-form of 6-hydroxynicotine. Also involved in the degradation of nornicotine, and catalyzes the oxidation of 6-hydroxynornicotine to 6-hydroxymyosmine, which hydrolyzes to 6-hydroxypseudooxynornicotine. In vitro, converts (S)-nicotine into N-methylmyosmine, which spontaneously hydrolyzes spontaneously into pseudooxynicotine, but catalytic efficiency is about 1900-fold higher with (S)-6-hydroxynicotine. This is (S)-6-hydroxynicotine oxidase from Shinella sp. (strain HZN7).